The following is a 456-amino-acid chain: Antigen Lp49 (456 aa).

The N-terminal stretch at 1–34 is a signal peptide; that stretch reads MNSNPKKKFLKLIKIKSDIILLIPIFLFLVCCKS. Residues Cys346 and Cys347 are joined by a disulfide bond.

It is found in the cell outer membrane. Its function is as follows. May be involved in virulence. Binds human plasminogen (PLG) and stimulates its proteolytic cleavage to enzymatically active plasmin in the presence of an urokinase-type PLG activator in vitro. Activated plasmin has proteolytic activity which may help the bacteria to spread throughout the host by degrading extracellular matrix components, facilitating tissue penetration and invasion. This Leptospira interrogans serogroup Icterohaemorrhagiae serovar copenhageni (strain Fiocruz L1-130) protein is Antigen Lp49.